Here is a 321-residue protein sequence, read N- to C-terminus: Ribosomal RNA small subunit methyltransferase H (321 aa).

Residues 44-46 (GGH), Asp64, Phe88, Asp109, and Gln116 contribute to the S-adenosyl-L-methionine site.

It belongs to the methyltransferase superfamily. RsmH family.

It localises to the cytoplasm. It catalyses the reaction cytidine(1402) in 16S rRNA + S-adenosyl-L-methionine = N(4)-methylcytidine(1402) in 16S rRNA + S-adenosyl-L-homocysteine + H(+). In terms of biological role, specifically methylates the N4 position of cytidine in position 1402 (C1402) of 16S rRNA. The sequence is that of Ribosomal RNA small subunit methyltransferase H from Methylobacillus flagellatus (strain ATCC 51484 / DSM 6875 / VKM B-1610 / KT).